We begin with the raw amino-acid sequence, 848 residues long: Coiled-coil domain-containing protein 110 (848 aa).

Positions 41–62 (SEGVKESGGNEPEYGCASEPEN) are disordered. Positions 442-794 (LQNYLKESLQ…LSDKVSSQNN (353 aa)) form a coiled coil. Serine 620 bears the Phosphoserine mark.

The protein localises to the nucleus. The sequence is that of Coiled-coil domain-containing protein 110 (Ccdc110) from Mus musculus (Mouse).